A 74-amino-acid chain; its full sequence is Cytochrome c oxidase subunit 3 (74 aa).

The next 2 helical transmembrane spans lie at 15–37 (SPWP…KWFH) and 42–59 (SLFL…YQWW).

It belongs to the cytochrome c oxidase subunit 3 family. As to quaternary structure, component of the cytochrome c oxidase (complex IV, CIV), a multisubunit enzyme composed of a catalytic core of 3 subunits and several supernumerary subunits. The complex exists as a monomer or a dimer and forms supercomplexes (SCs) in the inner mitochondrial membrane with ubiquinol-cytochrome c oxidoreductase (cytochrome b-c1 complex, complex III, CIII).

It is found in the mitochondrion inner membrane. The catalysed reaction is 4 Fe(II)-[cytochrome c] + O2 + 8 H(+)(in) = 4 Fe(III)-[cytochrome c] + 2 H2O + 4 H(+)(out). In terms of biological role, component of the cytochrome c oxidase, the last enzyme in the mitochondrial electron transport chain which drives oxidative phosphorylation. The respiratory chain contains 3 multisubunit complexes succinate dehydrogenase (complex II, CII), ubiquinol-cytochrome c oxidoreductase (cytochrome b-c1 complex, complex III, CIII) and cytochrome c oxidase (complex IV, CIV), that cooperate to transfer electrons derived from NADH and succinate to molecular oxygen, creating an electrochemical gradient over the inner membrane that drives transmembrane transport and the ATP synthase. Cytochrome c oxidase is the component of the respiratory chain that catalyzes the reduction of oxygen to water. Electrons originating from reduced cytochrome c in the intermembrane space (IMS) are transferred via the dinuclear copper A center (CU(A)) of subunit 2 and heme A of subunit 1 to the active site in subunit 1, a binuclear center (BNC) formed by heme A3 and copper B (CU(B)). The BNC reduces molecular oxygen to 2 water molecules using 4 electrons from cytochrome c in the IMS and 4 protons from the mitochondrial matrix. In Drosophila simulans (Fruit fly), this protein is Cytochrome c oxidase subunit 3 (mt:CoIII).